We begin with the raw amino-acid sequence, 461 residues long: ADP-specific phosphofructokinase (461 aa).

The 457-residue stretch at 1 to 457 (MVRELLEKAR…FTSYLAMLKE (457 aa)) folds into the ADPK domain. Mg(2+) contacts are provided by E268, E298, and D441. The active-site Proton acceptor is D441.

It belongs to the carbohydrate kinase PfkC family. It depends on Mg(2+) as a cofactor.

It localises to the cytoplasm. It catalyses the reaction beta-D-fructose 6-phosphate + ADP = beta-D-fructose 1,6-bisphosphate + AMP + H(+). It participates in carbohydrate degradation; glycolysis. In terms of biological role, catalyzes the phosphorylation of fructose 6-phosphate to fructose 1,6-bisphosphate using ADP as the phosphate donor. The protein is ADP-specific phosphofructokinase of Thermococcus kodakarensis (strain ATCC BAA-918 / JCM 12380 / KOD1) (Pyrococcus kodakaraensis (strain KOD1)).